The following is a 276-amino-acid chain: Rhomboid protease GlpG (276 aa).

6 helical membrane passes run 94-114 (GPFT…QNLL), 142-162 (AFMH…WYLG), 169-189 (IGSG…GFVQ), 192-212 (FSGP…GYVW), 229-249 (LILF…GMAI), and 252-272 (GAHV…TLHG). Catalysis depends on Ser-201, which acts as the Nucleophile. His-254 is an active-site residue.

The protein belongs to the peptidase S54 family.

Its subcellular location is the cell inner membrane. The enzyme catalyses Cleaves type-1 transmembrane domains using a catalytic dyad composed of serine and histidine that are contributed by different transmembrane domains.. Functionally, rhomboid-type serine protease that catalyzes intramembrane proteolysis. This is Rhomboid protease GlpG from Klebsiella pneumoniae subsp. pneumoniae (strain ATCC 700721 / MGH 78578).